We begin with the raw amino-acid sequence, 175 residues long: Protein GrpE (175 aa).

It belongs to the GrpE family. As to quaternary structure, homodimer.

The protein resides in the cytoplasm. Participates actively in the response to hyperosmotic and heat shock by preventing the aggregation of stress-denatured proteins, in association with DnaK and GrpE. It is the nucleotide exchange factor for DnaK and may function as a thermosensor. Unfolded proteins bind initially to DnaJ; upon interaction with the DnaJ-bound protein, DnaK hydrolyzes its bound ATP, resulting in the formation of a stable complex. GrpE releases ADP from DnaK; ATP binding to DnaK triggers the release of the substrate protein, thus completing the reaction cycle. Several rounds of ATP-dependent interactions between DnaJ, DnaK and GrpE are required for fully efficient folding. In Thermoplasma acidophilum (strain ATCC 25905 / DSM 1728 / JCM 9062 / NBRC 15155 / AMRC-C165), this protein is Protein GrpE.